Consider the following 479-residue polypeptide: MLPRHHEPIAAIATAPGRGAVGIVRVSGRGLTALATALVGRPLRPRVASYGPFLDRQGGAIDRGLALHFPAPHSYTGEDVLELQAHGGPVVLQLLLARCLEAAGEIGTDGRPRLPGLRLAQPGEFTERAYLNDKLDLAQAEAVADLIDASTEAAARSAARSLSGDFSRQITHLRDGLIELRALVEATLDFPEEEIDFLQRADAHGRLARLAERLAGLLDTARQGALLREGLRVVIAGQPNAGKSSLLNALAGAELAIVTPIPGTTRDKISETIQIEGVPVHVIDTAGLRSDEQAGDEVERIGISRSWQAIAEADAVLLLHDLTREHEPAYSAADTAIAQRLPADVGLIHVHNKADAAPEQAARVAARLAARQAGDAAGVVLSARTHDGIDALRAALLARAGWHAAPEGVFIARERHVRALRAAATHVTAAQGWAEQSDSALDLLAEELRSAHDALAEITGSYSSDDLLGDIFGRFCIGK.

(6S)-5-formyl-5,6,7,8-tetrahydrofolate-binding residues include arginine 25, glutamate 82, and lysine 134. Residues 230 to 401 (GLRVVIAGQP…LRAALLARAG (172 aa)) enclose the TrmE-type G domain. Position 240 (asparagine 240) interacts with K(+). GTP-binding positions include 240 to 245 (NAGKSS), 259 to 265 (TPIPGTT), 284 to 287 (DTAG), 352 to 355 (NKAD), and 382 to 384 (SAR). Serine 244 contributes to the Mg(2+) binding site. K(+) is bound by residues threonine 259, isoleucine 261, and threonine 264. Threonine 265 serves as a coordination point for Mg(2+). Lysine 479 lines the (6S)-5-formyl-5,6,7,8-tetrahydrofolate pocket.

Belongs to the TRAFAC class TrmE-Era-EngA-EngB-Septin-like GTPase superfamily. TrmE GTPase family. As to quaternary structure, homodimer. Heterotetramer of two MnmE and two MnmG subunits. It depends on K(+) as a cofactor.

It localises to the cytoplasm. Functionally, exhibits a very high intrinsic GTPase hydrolysis rate. Involved in the addition of a carboxymethylaminomethyl (cmnm) group at the wobble position (U34) of certain tRNAs, forming tRNA-cmnm(5)s(2)U34. This chain is tRNA modification GTPase MnmE, found in Leptothrix cholodnii (strain ATCC 51168 / LMG 8142 / SP-6) (Leptothrix discophora (strain SP-6)).